Consider the following 154-residue polypeptide: Protein-export protein SecB (154 aa).

The protein belongs to the SecB family. Homotetramer, a dimer of dimers. One homotetramer interacts with 1 SecA dimer.

It is found in the cytoplasm. Its function is as follows. One of the proteins required for the normal export of preproteins out of the cell cytoplasm. It is a molecular chaperone that binds to a subset of precursor proteins, maintaining them in a translocation-competent state. It also specifically binds to its receptor SecA. The chain is Protein-export protein SecB from Vibrio cholerae serotype O1 (strain ATCC 39541 / Classical Ogawa 395 / O395).